Consider the following 260-residue polypeptide: Proline-rich protein 33 (260 aa).

The tract at residues 29–132 (GVQTVSPRPE…KVAPKPSRSG (104 aa)) is disordered. Over residues 73–83 (GPSPYSPPPAA) the composition is skewed to pro residues.

This Mus musculus (Mouse) protein is Proline-rich protein 33 (Prr33).